The chain runs to 311 residues: Serine hydrolase-like protein (311 aa).

Positions 27–227 (PPVLCLHGWL…FVSKEMFVHS (201 aa)) constitute an AB hydrolase-1 domain. Residue Ser-102 is part of the active site. Ser-210 carries the phosphoserine modification.

It belongs to the AB hydrolase superfamily. Ubiquitous. High protein expression in skeletal and cardiac muscle.

The protein resides in the cytoplasm. The protein localises to the perinuclear region. It is found in the peroxisome. In terms of biological role, probable serine hydrolase. May be related to cell muscle hypertrophy. The chain is Serine hydrolase-like protein (Serhl) from Mus musculus (Mouse).